We begin with the raw amino-acid sequence, 313 residues long: Formate-nitrite transporter (313 aa).

The Cytoplasmic portion of the chain corresponds to 1–46 (MTKGSKYTIDPISVKTACTSEESYIRCVEYGKGKAHYPNLSLLAKA). The chain crosses the membrane as a helical span at residues 47 to 67 (ILAGVFVGVCAHASGIAGGHF). The Extracellular portion of the chain corresponds to 68–77 (YYHKLREHVG). The chain crosses the membrane as a helical span at residues 78 to 98 (ISMSAFVYGFTFPIAFLCIIA). Over 99-127 (TGSDLFTGNTLAVTTALLQRKVTLLEYLR) the chain is Cytoplasmic. The helical transmembrane segment at 128–148 (VMSISLFGNYVGAVSFAFFVS) threads the bilayer. Topologically, residues 149–184 (HLSGAFKKHEEIGKNHIFQFLNDIAEKKVSHTFVQC) are extracellular. A helical membrane pass occupies residues 185-205 (VCLAIGCNIFVCLAVYFVLTI). Residues 206 to 210 (KDGSG) are Cytoplasmic-facing. Residues 211–231 (MVFSVFFAVYAFAIAGYEHII) traverse the membrane as a helical segment. The Extracellular segment spans residues 232-256 (ANMYTLNLALMIEANVDWTKVYVDN). A helical transmembrane segment spans residues 257–277 (LLPTLIGNYIAGAIVLACPLF). The Cytoplasmic portion of the chain corresponds to 278–313 (YIYRHSYSDYEKTRGDGGNSGLKSLSIEMQNGSSGR). Positions 290 to 313 (TRGDGGNSGLKSLSIEMQNGSSGR) are disordered. Polar residues predominate over residues 298-313 (GLKSLSIEMQNGSSGR).

Belongs to the FNT transporter (TC 1.A.16) family. In terms of assembly, homopentamer.

It localises to the cell membrane. It is found in the vacuole membrane. It carries out the reaction (S)-lactate(in) + H(+)(in) = (S)-lactate(out) + H(+)(out). It catalyses the reaction formate(in) + H(+)(in) = formate(out) + H(+)(out). The enzyme catalyses pyruvate(out) + H(+)(out) = pyruvate(in) + H(+)(in). The catalysed reaction is acetate(out) + H(+)(out) = acetate(in) + H(+)(in). With respect to regulation, inhibited by the Malaria Box compound MMV007839 and its derivatives BH296 and BH267.meta. Its function is as follows. Monocarboxylate-proton symporter that mediates the efflux of the waste product lactate in the intraerythrocytic parasites; active in acidic-to-neutral pH range. Transports L-lactate. The chain is Formate-nitrite transporter from Plasmodium vivax.